Reading from the N-terminus, the 342-residue chain is UDP-3-O-acylglucosamine N-acyltransferase (342 aa).

Catalysis depends on His234, which acts as the Proton acceptor.

This sequence belongs to the transferase hexapeptide repeat family. LpxD subfamily. As to quaternary structure, homotrimer.

It carries out the reaction a UDP-3-O-[(3R)-3-hydroxyacyl]-alpha-D-glucosamine + a (3R)-hydroxyacyl-[ACP] = a UDP-2-N,3-O-bis[(3R)-3-hydroxyacyl]-alpha-D-glucosamine + holo-[ACP] + H(+). Its pathway is bacterial outer membrane biogenesis; LPS lipid A biosynthesis. Its function is as follows. Catalyzes the N-acylation of UDP-3-O-acylglucosamine using 3-hydroxyacyl-ACP as the acyl donor. Is involved in the biosynthesis of lipid A, a phosphorylated glycolipid that anchors the lipopolysaccharide to the outer membrane of the cell. This is UDP-3-O-acylglucosamine N-acyltransferase from Oleidesulfovibrio alaskensis (strain ATCC BAA-1058 / DSM 17464 / G20) (Desulfovibrio alaskensis).